The following is a 701-amino-acid chain: Glycine--tRNA ligase beta subunit (701 aa).

Belongs to the class-II aminoacyl-tRNA synthetase family. Tetramer of two alpha and two beta subunits.

The protein localises to the cytoplasm. The catalysed reaction is tRNA(Gly) + glycine + ATP = glycyl-tRNA(Gly) + AMP + diphosphate. This chain is Glycine--tRNA ligase beta subunit, found in Thiobacillus denitrificans (strain ATCC 25259 / T1).